A 273-amino-acid polypeptide reads, in one-letter code: Imidazole glycerol phosphate synthase subunit HisF (273 aa).

Active-site residues include Asp11 and Asp134.

This sequence belongs to the HisA/HisF family. Heterodimer of HisH and HisF.

It localises to the cytoplasm. The enzyme catalyses 5-[(5-phospho-1-deoxy-D-ribulos-1-ylimino)methylamino]-1-(5-phospho-beta-D-ribosyl)imidazole-4-carboxamide + L-glutamine = D-erythro-1-(imidazol-4-yl)glycerol 3-phosphate + 5-amino-1-(5-phospho-beta-D-ribosyl)imidazole-4-carboxamide + L-glutamate + H(+). It functions in the pathway amino-acid biosynthesis; L-histidine biosynthesis; L-histidine from 5-phospho-alpha-D-ribose 1-diphosphate: step 5/9. Its function is as follows. IGPS catalyzes the conversion of PRFAR and glutamine to IGP, AICAR and glutamate. The HisF subunit catalyzes the cyclization activity that produces IGP and AICAR from PRFAR using the ammonia provided by the HisH subunit. This Methanosarcina acetivorans (strain ATCC 35395 / DSM 2834 / JCM 12185 / C2A) protein is Imidazole glycerol phosphate synthase subunit HisF.